A 398-amino-acid polypeptide reads, in one-letter code: Bifunctional enzyme IspD/IspF (398 aa).

Residues 1–234 (MPNPPRTAAI…SRLTALLGDI (234 aa)) are 2-C-methyl-D-erythritol 4-phosphate cytidylyltransferase. The segment at 235–398 (RTGTGYDVHA…LPWGAEGLAG (164 aa)) is 2-C-methyl-D-erythritol 2,4-cyclodiphosphate synthase. A divalent metal cation contacts are provided by D241 and H243. 4-CDP-2-C-methyl-D-erythritol 2-phosphate is bound by residues 241 to 243 (DVH) and 267 to 268 (HS). H275 serves as a coordination point for a divalent metal cation. 4-CDP-2-C-methyl-D-erythritol 2-phosphate is bound by residues 289–291 (DIG), 365–368 (TTSE), F372, and R375.

The protein in the N-terminal section; belongs to the IspD/TarI cytidylyltransferase family. IspD subfamily. It in the C-terminal section; belongs to the IspF family. It depends on a divalent metal cation as a cofactor.

It catalyses the reaction 2-C-methyl-D-erythritol 4-phosphate + CTP + H(+) = 4-CDP-2-C-methyl-D-erythritol + diphosphate. The catalysed reaction is 4-CDP-2-C-methyl-D-erythritol 2-phosphate = 2-C-methyl-D-erythritol 2,4-cyclic diphosphate + CMP. Its pathway is isoprenoid biosynthesis; isopentenyl diphosphate biosynthesis via DXP pathway; isopentenyl diphosphate from 1-deoxy-D-xylulose 5-phosphate: step 2/6. The protein operates within isoprenoid biosynthesis; isopentenyl diphosphate biosynthesis via DXP pathway; isopentenyl diphosphate from 1-deoxy-D-xylulose 5-phosphate: step 4/6. Its function is as follows. Bifunctional enzyme that catalyzes the formation of 4-diphosphocytidyl-2-C-methyl-D-erythritol from CTP and 2-C-methyl-D-erythritol 4-phosphate (MEP) (IspD), and catalyzes the conversion of 4-diphosphocytidyl-2-C-methyl-D-erythritol 2-phosphate (CDP-ME2P) to 2-C-methyl-D-erythritol 2,4-cyclodiphosphate (ME-CPP) with a corresponding release of cytidine 5-monophosphate (CMP) (IspF). This chain is Bifunctional enzyme IspD/IspF, found in Rhodopseudomonas palustris (strain BisB5).